The primary structure comprises 277 residues: Putative phosphoenolpyruvate synthase regulatory protein (277 aa).

ADP is bound at residue 157-164; sequence GVSRCGKT.

Belongs to the pyruvate, phosphate/water dikinase regulatory protein family. PSRP subfamily.

It carries out the reaction [pyruvate, water dikinase] + ADP = [pyruvate, water dikinase]-phosphate + AMP + H(+). It catalyses the reaction [pyruvate, water dikinase]-phosphate + phosphate + H(+) = [pyruvate, water dikinase] + diphosphate. Its function is as follows. Bifunctional serine/threonine kinase and phosphorylase involved in the regulation of the phosphoenolpyruvate synthase (PEPS) by catalyzing its phosphorylation/dephosphorylation. This is Putative phosphoenolpyruvate synthase regulatory protein from Citrobacter koseri (strain ATCC BAA-895 / CDC 4225-83 / SGSC4696).